Here is an 89-residue protein sequence, read N- to C-terminus: MSITAERRTALISEYKQSETDTGSPEVQVAILSERIVNLTEHLKTHKKDFHSRRGLLMMVGQRRSLLDYLKRKDQARYQSLIERLGLRR.

It belongs to the universal ribosomal protein uS15 family. Part of the 30S ribosomal subunit. Forms a bridge to the 50S subunit in the 70S ribosome, contacting the 23S rRNA.

Its function is as follows. One of the primary rRNA binding proteins, it binds directly to 16S rRNA where it helps nucleate assembly of the platform of the 30S subunit by binding and bridging several RNA helices of the 16S rRNA. In terms of biological role, forms an intersubunit bridge (bridge B4) with the 23S rRNA of the 50S subunit in the ribosome. This Gluconobacter oxydans (strain 621H) (Gluconobacter suboxydans) protein is Small ribosomal subunit protein uS15.